The primary structure comprises 450 residues: tRNA modification GTPase MnmE (450 aa).

Residues arginine 23, glutamate 79, and lysine 118 each coordinate (6S)-5-formyl-5,6,7,8-tetrahydrofolate. Residues 214 to 374 (GITLILVGKP…LKEHILNKVG (161 aa)) enclose the TrmE-type G domain. Position 224 (asparagine 224) interacts with K(+). Residues 224–229 (NAGKSS), 243–249 (TSIAGTT), and 268–271 (DTAG) contribute to the GTP site. Serine 228 lines the Mg(2+) pocket. Residues threonine 243, isoleucine 245, and threonine 248 each contribute to the K(+) site. Threonine 249 serves as a coordination point for Mg(2+). A (6S)-5-formyl-5,6,7,8-tetrahydrofolate-binding site is contributed by lysine 450.

The protein belongs to the TRAFAC class TrmE-Era-EngA-EngB-Septin-like GTPase superfamily. TrmE GTPase family. As to quaternary structure, homodimer. Heterotetramer of two MnmE and two MnmG subunits. The cofactor is K(+).

The protein resides in the cytoplasm. Functionally, exhibits a very high intrinsic GTPase hydrolysis rate. Involved in the addition of a carboxymethylaminomethyl (cmnm) group at the wobble position (U34) of certain tRNAs, forming tRNA-cmnm(5)s(2)U34. The protein is tRNA modification GTPase MnmE of Francisella tularensis subsp. tularensis (strain WY96-3418).